The primary structure comprises 270 residues: Thymidylate synthase (270 aa).

Residues Arg-28 and 133-134 (RR) each bind dUMP. Cys-153 functions as the Nucleophile in the catalytic mechanism. Residues 173 to 176 (RSAD), Asn-184, and 214 to 216 (HIY) each bind dUMP. Asp-176 contributes to the (6R)-5,10-methylene-5,6,7,8-tetrahydrofolate binding site. A (6R)-5,10-methylene-5,6,7,8-tetrahydrofolate-binding site is contributed by Ala-269.

Belongs to the thymidylate synthase family. Bacterial-type ThyA subfamily. In terms of assembly, homodimer.

It is found in the cytoplasm. The catalysed reaction is dUMP + (6R)-5,10-methylene-5,6,7,8-tetrahydrofolate = 7,8-dihydrofolate + dTMP. The protein operates within pyrimidine metabolism; dTTP biosynthesis. Its function is as follows. Catalyzes the reductive methylation of 2'-deoxyuridine-5'-monophosphate (dUMP) to 2'-deoxythymidine-5'-monophosphate (dTMP) while utilizing 5,10-methylenetetrahydrofolate (mTHF) as the methyl donor and reductant in the reaction, yielding dihydrofolate (DHF) as a by-product. This enzymatic reaction provides an intracellular de novo source of dTMP, an essential precursor for DNA biosynthesis. The polypeptide is Thymidylate synthase (Corynebacterium diphtheriae (strain ATCC 700971 / NCTC 13129 / Biotype gravis)).